The primary structure comprises 393 residues: Triacylglycerol lipase 1 (393 aa).

Positions 1-20 are cleaved as a signal peptide; the sequence is MKWLLVAVLTSLTIFSALTQ. Asn41 carries an N-linked (GlcNAc...) asparagine glycan. Ser166 serves as the catalytic Nucleophile. Asn261 carries an N-linked (GlcNAc...) asparagine glycan. Catalysis depends on charge relay system residues Asp334 and His363.

It belongs to the AB hydrolase superfamily. Lipase family. As to expression, expressed in seedlings, roots, leaves, flowers and siliques. Specifically expressed in the epidermis.

Its subcellular location is the secreted. The enzyme catalyses a triacylglycerol + H2O = a diacylglycerol + a fatty acid + H(+). It carries out the reaction 1,2,3-tributanoylglycerol + H2O = dibutanoylglycerol + butanoate + H(+). It catalyses the reaction 1,2,3-trioctanoylglycerol + H2O = dioctanoylglycerol + octanoate + H(+). It functions in the pathway lipid metabolism; glycerolipid metabolism. Its function is as follows. Triacylglycerol (TAG) lipase active on triolein, trioctanoin, tributyrin and 1,3-Diolein, but not on phospho- and galactolipids. Involved but dispensable for TAG storage breakdown during seed germination. In Arabidopsis thaliana (Mouse-ear cress), this protein is Triacylglycerol lipase 1.